The following is a 171-amino-acid chain: Large ribosomal subunit protein uL10 (171 aa).

This sequence belongs to the universal ribosomal protein uL10 family. Part of the ribosomal stalk of the 50S ribosomal subunit. The N-terminus interacts with L11 and the large rRNA to form the base of the stalk. The C-terminus forms an elongated spine to which L12 dimers bind in a sequential fashion forming a multimeric L10(L12)X complex.

In terms of biological role, forms part of the ribosomal stalk, playing a central role in the interaction of the ribosome with GTP-bound translation factors. This Maricaulis maris (strain MCS10) (Caulobacter maris) protein is Large ribosomal subunit protein uL10.